The chain runs to 365 residues: Aminomethyltransferase (365 aa).

It belongs to the GcvT family. The glycine cleavage system is composed of four proteins: P, T, L and H.

The enzyme catalyses N(6)-[(R)-S(8)-aminomethyldihydrolipoyl]-L-lysyl-[protein] + (6S)-5,6,7,8-tetrahydrofolate = N(6)-[(R)-dihydrolipoyl]-L-lysyl-[protein] + (6R)-5,10-methylene-5,6,7,8-tetrahydrofolate + NH4(+). Functionally, the glycine cleavage system catalyzes the degradation of glycine. The chain is Aminomethyltransferase from Chlorobium phaeobacteroides (strain DSM 266 / SMG 266 / 2430).